A 334-amino-acid chain; its full sequence is Holliday junction branch migration complex subunit RuvB (334 aa).

The segment at 4-184 (ADRLIQPQLQ…FGIPLRLEFY (181 aa)) is large ATPase domain (RuvB-L). Residues Arg-24, Gly-65, Lys-68, Thr-69, Thr-70, 131–133 (EDY), Arg-174, Tyr-184, and Arg-221 contribute to the ATP site. Position 69 (Thr-69) interacts with Mg(2+). Positions 185 to 255 (NIKDLSTIVT…VADHALDLLD (71 aa)) are small ATPAse domain (RuvB-S). The segment at 258 to 334 (NEGFDYMDRK…YQHFQLIKPE (77 aa)) is head domain (RuvB-H). 3 residues coordinate DNA: Arg-294, Arg-313, and Arg-318.

It belongs to the RuvB family. Homohexamer. Forms an RuvA(8)-RuvB(12)-Holliday junction (HJ) complex. HJ DNA is sandwiched between 2 RuvA tetramers; dsDNA enters through RuvA and exits via RuvB. An RuvB hexamer assembles on each DNA strand where it exits the tetramer. Each RuvB hexamer is contacted by two RuvA subunits (via domain III) on 2 adjacent RuvB subunits; this complex drives branch migration. In the full resolvosome a probable DNA-RuvA(4)-RuvB(12)-RuvC(2) complex forms which resolves the HJ.

It localises to the cytoplasm. It catalyses the reaction ATP + H2O = ADP + phosphate + H(+). In terms of biological role, the RuvA-RuvB-RuvC complex processes Holliday junction (HJ) DNA during genetic recombination and DNA repair, while the RuvA-RuvB complex plays an important role in the rescue of blocked DNA replication forks via replication fork reversal (RFR). RuvA specifically binds to HJ cruciform DNA, conferring on it an open structure. The RuvB hexamer acts as an ATP-dependent pump, pulling dsDNA into and through the RuvAB complex. RuvB forms 2 homohexamers on either side of HJ DNA bound by 1 or 2 RuvA tetramers; 4 subunits per hexamer contact DNA at a time. Coordinated motions by a converter formed by DNA-disengaged RuvB subunits stimulates ATP hydrolysis and nucleotide exchange. Immobilization of the converter enables RuvB to convert the ATP-contained energy into a lever motion, pulling 2 nucleotides of DNA out of the RuvA tetramer per ATP hydrolyzed, thus driving DNA branch migration. The RuvB motors rotate together with the DNA substrate, which together with the progressing nucleotide cycle form the mechanistic basis for DNA recombination by continuous HJ branch migration. Branch migration allows RuvC to scan DNA until it finds its consensus sequence, where it cleaves and resolves cruciform DNA. In Shewanella putrefaciens (strain CN-32 / ATCC BAA-453), this protein is Holliday junction branch migration complex subunit RuvB.